Consider the following 426-residue polypeptide: Serine--tRNA ligase (426 aa).

Residue 233–235 (TAE) coordinates L-serine. 264-266 (RSE) is an ATP binding site. Glutamate 287 is a binding site for L-serine. 351-354 (EISS) serves as a coordination point for ATP. Serine 387 contributes to the L-serine binding site.

It belongs to the class-II aminoacyl-tRNA synthetase family. Type-1 seryl-tRNA synthetase subfamily. In terms of assembly, homodimer. The tRNA molecule binds across the dimer.

It is found in the cytoplasm. It catalyses the reaction tRNA(Ser) + L-serine + ATP = L-seryl-tRNA(Ser) + AMP + diphosphate + H(+). The catalysed reaction is tRNA(Sec) + L-serine + ATP = L-seryl-tRNA(Sec) + AMP + diphosphate + H(+). It participates in aminoacyl-tRNA biosynthesis; selenocysteinyl-tRNA(Sec) biosynthesis; L-seryl-tRNA(Sec) from L-serine and tRNA(Sec): step 1/1. Functionally, catalyzes the attachment of serine to tRNA(Ser). Is also able to aminoacylate tRNA(Sec) with serine, to form the misacylated tRNA L-seryl-tRNA(Sec), which will be further converted into selenocysteinyl-tRNA(Sec). The protein is Serine--tRNA ligase of Clostridium botulinum (strain Loch Maree / Type A3).